Reading from the N-terminus, the 334-residue chain is Protein POLAR-like 1 (334 aa).

The span at 53-63 (IRTSSEDDHHR) shows a compositional bias: basic and acidic residues. Residues 53–74 (IRTSSEDDHHRVGQFSDSPPPT) form a disordered region. The stretch at 273-300 (ETRQQEEIKELEIALDDAKQRLHLKETE) forms a coiled coil.

It is found in the cytoplasm. It localises to the cell cortex. Acts as a stomatal lineage scaffold which regulates subcellular localization and transient polarization of kinases (e.g. ASK7/BIN2 and ASK3/SK12) involved in asymmetric cell division (ACD) in a BASL-dependent manner. The chain is Protein POLAR-like 1 from Arabidopsis thaliana (Mouse-ear cress).